Here is a 310-residue protein sequence, read N- to C-terminus: Beta sliding clamp (310 aa).

It belongs to the beta sliding clamp family. As to quaternary structure, forms a ring-shaped head-to-tail homodimer around DNA which binds and tethers DNA polymerases and other proteins to the DNA. The DNA replisome complex has a single clamp-loading complex (3 tau and 1 each of delta, delta', psi and chi subunits) which binds 3 Pol III cores (1 core on the leading strand and 2 on the lagging strand) each with a beta sliding clamp dimer. Additional proteins in the replisome are other copies of gamma, psi and chi, Ssb, DNA helicase and RNA primase.

It localises to the cytoplasm. In terms of biological role, confers DNA tethering and processivity to DNA polymerases and other proteins. Acts as a clamp, forming a ring around DNA (a reaction catalyzed by the clamp-loading complex) which diffuses in an ATP-independent manner freely and bidirectionally along dsDNA. Initially characterized for its ability to contact the catalytic subunit of DNA polymerase III (Pol III), a complex, multichain enzyme responsible for most of the replicative synthesis in bacteria; Pol III exhibits 3'-5' exonuclease proofreading activity. The beta chain is required for initiation of replication as well as for processivity of DNA replication. The chain is Beta sliding clamp (dnaN) from Micrococcus luteus (Micrococcus lysodeikticus).